The primary structure comprises 429 residues: Ribosomal RNA small subunit methyltransferase B (429 aa).

Residues 254–260, aspartate 277, aspartate 303, and aspartate 322 contribute to the S-adenosyl-L-methionine site; that span reads CAAPGGK. Cysteine 375 (nucleophile) is an active-site residue.

This sequence belongs to the class I-like SAM-binding methyltransferase superfamily. RsmB/NOP family.

The protein localises to the cytoplasm. The catalysed reaction is cytidine(967) in 16S rRNA + S-adenosyl-L-methionine = 5-methylcytidine(967) in 16S rRNA + S-adenosyl-L-homocysteine + H(+). In terms of biological role, specifically methylates the cytosine at position 967 (m5C967) of 16S rRNA. The protein is Ribosomal RNA small subunit methyltransferase B of Shigella flexneri serotype 5b (strain 8401).